A 330-amino-acid chain; its full sequence is Malate dehydrogenase (330 aa).

Glycine 15 to glycine 21 contributes to the NAD(+) binding site. The substrate site is built by arginine 95 and arginine 101. NAD(+) is bound by residues asparagine 108, glutamine 115, and valine 132–asparagine 134. Substrate is bound by residues asparagine 134 and arginine 165. Residue histidine 190 is the Proton acceptor of the active site.

Belongs to the LDH/MDH superfamily. MDH type 2 family.

It catalyses the reaction (S)-malate + NAD(+) = oxaloacetate + NADH + H(+). In terms of biological role, catalyzes the reversible oxidation of malate to oxaloacetate. This chain is Malate dehydrogenase, found in Corynebacterium jeikeium (strain K411).